Reading from the N-terminus, the 499-residue chain is Protein SENSITIVE TO PROTON RHIZOTOXICITY 1 (499 aa).

The interval 1-31 (METEDDLCNTNWGSSSSKSREPGSSDCGNST) is disordered. The segment at 244–266 (HFCTICGKGFKRDANLRMHMRGH) adopts a C2H2-type 1 zinc-finger fold. A C2H2-type 2; atypical zinc finger spans residues 354–385 (KHCGKNKWLCSCGTTFSRKDKLFGHIALFQGH). The tract at residues 390–436 (PLEETKPSASTSTQRGSSEGGNNNQGMVGFNLGSASNANQETTQPGM) is disordered. Composition is skewed to polar residues over residues 396 to 415 (PSAS…NNQG) and 422 to 435 (GSAS…TQPG).

Expressed in roots (e.g. root tips and lateral roots), leaves, flowers (e.g. stigma, sepal, anther, and filament), stems, siliques and cotyledons.

The protein resides in the nucleus. In terms of biological role, probable transcription factor. Together with STOP2, plays a critical role in tolerance to major stress factors in acid soils such as proton H(+) and aluminum ion Al(3+). Required for the expression of genes in response to acidic stress (e.g. ALMT1 and MATE), and Al-activated citrate exudation. This is Protein SENSITIVE TO PROTON RHIZOTOXICITY 1 from Arabidopsis thaliana (Mouse-ear cress).